A 43-amino-acid chain; its full sequence is Cytochrome b559 subunit beta (43 aa).

The helical transmembrane segment at 18 to 34 threads the bilayer; that stretch reads WLAIHGLAIPTVFFLGG. His22 is a binding site for heme.

This sequence belongs to the PsbE/PsbF family. In terms of assembly, heterodimer of an alpha subunit and a beta subunit. PSII is composed of 1 copy each of membrane proteins PsbA, PsbB, PsbC, PsbD, PsbE, PsbF, PsbH, PsbI, PsbJ, PsbK, PsbL, PsbM, PsbT, PsbX, PsbY, PsbZ, Psb30/Ycf12, at least 3 peripheral proteins of the oxygen-evolving complex and a large number of cofactors. It forms dimeric complexes. Heme b is required as a cofactor.

It localises to the plastid. Its subcellular location is the chloroplast thylakoid membrane. In terms of biological role, this b-type cytochrome is tightly associated with the reaction center of photosystem II (PSII). PSII is a light-driven water:plastoquinone oxidoreductase that uses light energy to abstract electrons from H(2)O, generating O(2) and a proton gradient subsequently used for ATP formation. It consists of a core antenna complex that captures photons, and an electron transfer chain that converts photonic excitation into a charge separation. The chain is Cytochrome b559 subunit beta from Trieres chinensis (Marine centric diatom).